The primary structure comprises 253 residues: Phosphate import ATP-binding protein PstB (253 aa).

Positions 7 to 248 constitute an ABC transporter domain; sequence IDARDVNFWY…PEKEATQNYI (242 aa). 39–46 is a binding site for ATP; the sequence is GPSGCGKS.

It belongs to the ABC transporter superfamily. Phosphate importer (TC 3.A.1.7) family. In terms of assembly, the complex is composed of two ATP-binding proteins (PstB), two transmembrane proteins (PstC and PstA) and a solute-binding protein (PstS).

Its subcellular location is the cell inner membrane. It carries out the reaction phosphate(out) + ATP + H2O = ADP + 2 phosphate(in) + H(+). Its function is as follows. Part of the ABC transporter complex PstSACB involved in phosphate import. Responsible for energy coupling to the transport system. The polypeptide is Phosphate import ATP-binding protein PstB (Bacteroides fragilis (strain ATCC 25285 / DSM 2151 / CCUG 4856 / JCM 11019 / LMG 10263 / NCTC 9343 / Onslow / VPI 2553 / EN-2)).